A 431-amino-acid polypeptide reads, in one-letter code: Cyclic GMP-AMP synthase-like receptor (431 aa).

ATP is bound by residues S73 and 85 to 87 (EFD). The Mg(2+) site is built by E85, D87, and D212. D212 provides a ligand contact to GTP. ATP contacts are provided by residues K290 and 304–308 (SYALK). E316 contacts Mn(2+).

The protein belongs to the mab-21 family. It depends on Mg(2+) as a cofactor. Mn(2+) is required as a cofactor.

The enzyme catalyses GTP + ATP = 2',3'-cGAMP + 2 diphosphate. It carries out the reaction GTP + ATP = pppGp(2'-5')A + diphosphate. It catalyses the reaction pppGp(2'-5')A = 2',3'-cGAMP + diphosphate. Functionally, nucleotidyltransferase that catalyzes the formation of cyclic GMP-AMP (2',3'-cGAMP) from ATP and GTP and plays a key role in innate immunity. Acts as a key sensor of double-stranded RNA (dsRNA), the presence of dsRNA in the cytoplasm being a danger signal that triggers the immune responses. Directly binds dsRNA, activating the nucleotidyltransferase activity, leading to synthesis of 2',3'-cGAMP, a second messenger that binds to and activates Sting, thereby triggering the immune response via activation of the NF-kappa-B transcription factor. This is Cyclic GMP-AMP synthase-like receptor from Frankliniella occidentalis (Western flower thrips).